A 166-amino-acid chain; its full sequence is Probable chemoreceptor glutamine deamidase CheD (166 aa).

The protein belongs to the CheD family.

The catalysed reaction is L-glutaminyl-[protein] + H2O = L-glutamyl-[protein] + NH4(+). Probably deamidates glutamine residues to glutamate on methyl-accepting chemotaxis receptors (MCPs), playing an important role in chemotaxis. The sequence is that of Probable chemoreceptor glutamine deamidase CheD from Oceanobacillus iheyensis (strain DSM 14371 / CIP 107618 / JCM 11309 / KCTC 3954 / HTE831).